The chain runs to 199 residues: Elongation factor Ts (199 aa).

Positions 82–85 (TDFV) are involved in Mg(2+) ion dislocation from EF-Tu.

Belongs to the EF-Ts family.

Its subcellular location is the cytoplasm. In terms of biological role, associates with the EF-Tu.GDP complex and induces the exchange of GDP to GTP. It remains bound to the aminoacyl-tRNA.EF-Tu.GTP complex up to the GTP hydrolysis stage on the ribosome. This is Elongation factor Ts from Leptospira interrogans serogroup Icterohaemorrhagiae serovar copenhageni (strain Fiocruz L1-130).